Consider the following 816-residue polypeptide: Endo-acting ulvan lyase (816 aa).

Positions 1 to 23 (MGTSVRRISVVLMMLFGTNFCWS) are cleaved as a signal peptide.

It belongs to the polysaccharide lyase family.

The protein resides in the cell surface. Its subcellular location is the periplasm. Ulvan lyase involved in ulvan degradation. Ulvan is the main polysaccharide component of the Ulvales (green seaweed) cell wall. It is composed of disaccharide building blocks comprising 3-sulfated rhamnose (Rha3S) linked to D-glucuronic acid (GlcA), L-iduronic acid (IduA), or D-xylose (Xyl). Ulvan lyase catalyzes the endolytic cleavage of the glycosidic bond between Rha3S and the uronic acids GlcA or IduA, producing oligosaccharides that have unsaturated 4-deoxy-L-threo-hex-4-enopyranosiduronic acid (deltaUA) at the non-reducing end. This results eventually in the degradation of the ulvan polysaccharide into deltaUA-Rha3S disaccharides and deltaUA-Rha3S-Xyl-Rha3S tetrasaccharides. The sequence is that of Endo-acting ulvan lyase from Formosa agariphila (strain DSM 15362 / KCTC 12365 / LMG 23005 / KMM 3901 / M-2Alg 35-1).